Consider the following 338-residue polypeptide: MAKVMNLTPVHASSIPDSFLLPADRLHPATTDVSLPIIDMSRGRDEVRQAILDSGKEYGFIQVVNHGISEPMLHEMYAVCHEFFDMPAEDKAEFFSEDRSERNKLFCGSAFETLGEKYWIDVLELLYPLPSGDTKDWPHKPQMLREVVGNYTSLARGVAMEILRLLCEGLGLRPDFFVGDISGGRVVVDINYYPPSPNPSRTLGLPPHCDRDLMTVLLPGAVPGLEIAYKGGWIKVQPVPNSLVINFGLQLEVVTNGYLKAVEHRAATNFAEPRLSVASFIVPADDCVVGPAEEFVSEDNPPRYRTLTVGEFKRKHNVVNLDSSINQIININNNQKGI.

The Fe2OG dioxygenase domain occupies 180–283 (DISGGRVVVD…RLSVASFIVP (104 aa)). Histidine 208, aspartate 210, and histidine 264 together coordinate Fe cation. A 2-oxoglutarate-binding site is contributed by arginine 274.

Belongs to the iron/ascorbate-dependent oxidoreductase family. The cofactor is Fe(2+). Requires L-ascorbate as cofactor. Expressed in roots, but not in leaves.

The enzyme catalyses mugineate + 2-oxoglutarate + O2 = 3-epihydroxymugineate + succinate + CO2 + H(+). It carries out the reaction 2'-deoxymugineate + 2-oxoglutarate + O2 = 3-epihydroxy-2'-deoxymugineate + succinate + CO2 + H(+). Its function is as follows. Involved in the biosynthesis of mugineic acid family of phytosiderophores. Hydroxylates the C-3 positions of mugineic acid (MA) and 2'-deoxymugineic acid (DMA). May be involved in boron tolerance. In Hordeum vulgare (Barley), this protein is Mugineic-acid 3-dioxygenase (IDS2).